The sequence spans 366 residues: Holliday junction branch migration complex subunit RuvB (366 aa).

A disordered region spans residues 1–49 (MAIISSKKQPPEPNGQPNKRPESAPAAPKEKVLQPEAAIDEQGKQEESI). The interval 13 to 210 (PNGQPNKRPE…FGLIQKLRFY (198 aa)) is large ATPase domain (RuvB-L). Residues isoleucine 49, arginine 50, glycine 91, lysine 94, threonine 95, threonine 96, 157-159 (EDY), arginine 200, tyrosine 210, and arginine 247 contribute to the ATP site. Threonine 95 is a Mg(2+) binding site. The segment at 211 to 281 (EVDELSQIVL…IAAEALQLFQ (71 aa)) is small ATPAse domain (RuvB-S). The segment at 284 to 366 (PCGLDWTDRR…TPPNEQLSLL (83 aa)) is head domain (RuvB-H). DNA contacts are provided by arginine 339 and arginine 344.

It belongs to the RuvB family. Homohexamer. Forms an RuvA(8)-RuvB(12)-Holliday junction (HJ) complex. HJ DNA is sandwiched between 2 RuvA tetramers; dsDNA enters through RuvA and exits via RuvB. An RuvB hexamer assembles on each DNA strand where it exits the tetramer. Each RuvB hexamer is contacted by two RuvA subunits (via domain III) on 2 adjacent RuvB subunits; this complex drives branch migration. In the full resolvosome a probable DNA-RuvA(4)-RuvB(12)-RuvC(2) complex forms which resolves the HJ.

Its subcellular location is the cytoplasm. It carries out the reaction ATP + H2O = ADP + phosphate + H(+). The RuvA-RuvB-RuvC complex processes Holliday junction (HJ) DNA during genetic recombination and DNA repair, while the RuvA-RuvB complex plays an important role in the rescue of blocked DNA replication forks via replication fork reversal (RFR). RuvA specifically binds to HJ cruciform DNA, conferring on it an open structure. The RuvB hexamer acts as an ATP-dependent pump, pulling dsDNA into and through the RuvAB complex. RuvB forms 2 homohexamers on either side of HJ DNA bound by 1 or 2 RuvA tetramers; 4 subunits per hexamer contact DNA at a time. Coordinated motions by a converter formed by DNA-disengaged RuvB subunits stimulates ATP hydrolysis and nucleotide exchange. Immobilization of the converter enables RuvB to convert the ATP-contained energy into a lever motion, pulling 2 nucleotides of DNA out of the RuvA tetramer per ATP hydrolyzed, thus driving DNA branch migration. The RuvB motors rotate together with the DNA substrate, which together with the progressing nucleotide cycle form the mechanistic basis for DNA recombination by continuous HJ branch migration. Branch migration allows RuvC to scan DNA until it finds its consensus sequence, where it cleaves and resolves cruciform DNA. This is Holliday junction branch migration complex subunit RuvB from Trichormus variabilis (strain ATCC 29413 / PCC 7937) (Anabaena variabilis).